The following is a 224-amino-acid chain: MAFYPLQIAGLVLGFFGLVGTIGTTLLPQWRVSAFIGSNIIIFERIWEGLWMNCIQQAMVTLQCKFYNSILALPPVLEAARALMCVAVALALVALIIGICGMKQLQCTGSSERVKAYLLGTSGVLFILTGIFVLIPVSWTANIIIRDFYDPTVHAGQKRELGGALFLGWATAAVLFIGGGLLCGYCCCNRKERWHRYPVPAYRVPQKDNQRNVTVPRKSSTSYV.

Residues methionine 1–glutamine 7 are Cytoplasmic-facing. Residues isoleucine 8–proline 28 traverse the membrane as a helical segment. Residues glutamine 29–arginine 81 lie on the Extracellular side of the membrane. Residues alanine 82 to methionine 102 form a helical membrane-spanning segment. At lysine 103–valine 124 the chain is on the cytoplasmic side. A helical membrane pass occupies residues leucine 125–isoleucine 145. Residues arginine 146–alanine 164 are Extracellular-facing. Residues leucine 165–tyrosine 185 traverse the membrane as a helical segment. The Cytoplasmic segment spans residues cysteine 186 to valine 224.

The protein belongs to the claudin family. As to quaternary structure, does not form homotypic polymeric strands and it is not sufficient to form tight junctions by its own. Interacts with OCLN. In terms of tissue distribution, expressed at high levels in the kidney and at mucher lower levels in the brain. In the kidney, expression gradually decreases from the proximal tubule downstream to the distal convoluted tubule. Expressed in the thin ascending limb of Henle's loop, as well as in the thick ascending limb of Henle's loop. In the distal convoluted tubules, expressed only in a few tubules. Not detected in the collecting duct. In the brain, expressed in blood vessels (at protein level).

The protein resides in the cell junction. The protein localises to the tight junction. Its subcellular location is the cell membrane. It carries out the reaction chloride(in) = chloride(out). The enzyme catalyses hydrogencarbonate(in) = hydrogencarbonate(out). It catalyses the reaction bromide(in) = bromide(out). The catalysed reaction is iodide(out) = iodide(in). It carries out the reaction fluoride(in) = fluoride(out). The enzyme catalyses nitrate(in) = nitrate(out). It catalyses the reaction thiocyanate(in) = thiocyanate(out). Channel-forming tight junction protein with selectivity for anions, including chloride and hydrogencarbonate, and for solutes smaller than 9 Angstrom in diameter. In the kidney proximal tubule, may be involved in quantitative reabsorption of filtered anions. Does not affect water permeability. In Mus musculus (Mouse), this protein is Claudin-17 (Cldn17).